The primary structure comprises 549 residues: Chaperonin GroEL (549 aa).

Residues 29–32 (TAGP), Lys-50, 86–90 (DGTTT), Gly-418, and Asp-499 contribute to the ATP site.

The protein belongs to the chaperonin (HSP60) family. In terms of assembly, forms a cylinder of 14 subunits composed of two heptameric rings stacked back-to-back. Interacts with the co-chaperonin GroES.

It localises to the cytoplasm. It catalyses the reaction ATP + H2O + a folded polypeptide = ADP + phosphate + an unfolded polypeptide.. In terms of biological role, together with its co-chaperonin GroES, plays an essential role in assisting protein folding. The GroEL-GroES system forms a nano-cage that allows encapsulation of the non-native substrate proteins and provides a physical environment optimized to promote and accelerate protein folding. This Wolbachia sp. subsp. Drosophila simulans (strain wRi) protein is Chaperonin GroEL.